A 214-amino-acid chain; its full sequence is Outer-membrane lipoprotein LolB (214 aa).

The N-terminal stretch at 1–25 is a signal peptide; sequence MNNLKRFTKSIFSCIALSGLLFLGG. Residue cysteine 26 is the site of N-palmitoyl cysteine attachment. Cysteine 26 carries S-diacylglycerol cysteine lipidation.

The protein belongs to the LolB family. Monomer.

The protein resides in the cell outer membrane. Its function is as follows. Plays a critical role in the incorporation of lipoproteins in the outer membrane after they are released by the LolA protein. This Shewanella sp. (strain MR-4) protein is Outer-membrane lipoprotein LolB.